A 290-amino-acid chain; its full sequence is Nucleotide-binding protein Bpet0443 (290 aa).

Residue 9 to 16 (GISGSGKS) coordinates ATP. 58–61 (DVRS) contacts GTP.

It belongs to the RapZ-like family.

In terms of biological role, displays ATPase and GTPase activities. This is Nucleotide-binding protein Bpet0443 from Bordetella petrii (strain ATCC BAA-461 / DSM 12804 / CCUG 43448).